A 670-amino-acid polypeptide reads, in one-letter code: G-protein coupled receptor moody (670 aa).

The Extracellular segment spans residues 1–40 (MSDETTISLEDGYPPLEALTTMVPPADATGFSQSLLTFAA). A helical membrane pass occupies residues 41–61 (VMTFLIMIVGICGNLLTVVAL). Topologically, residues 62–69 (LKCPKVRN) are cytoplasmic. Residues 70–90 (VAAAFIISLCIADLLFCALVL) form a helical membrane-spanning segment. Residues 91 to 111 (PFQGLRFVQGTWRHGQVLCRL) are Extracellular-facing. Cys109 and Cys188 are disulfide-bonded. Residues 112-132 (IPFIQYGNIGVSLLCIAMITI) traverse the membrane as a helical segment. Over 133–152 (NRYVMITHHGLYARIYKRHW) the chain is Cytoplasmic. Residues 153 to 173 (IAVMIAACWLFSYGMQLPTLL) form a helical membrane-spanning segment. Residues 174–202 (GEWGRFGYDSRLQTCSIMTDDHGHSSKTT) are Extracellular-facing. A helical transmembrane segment spans residues 203–223 (LFITAFVIPCLVIIACYAKIF). The Cytoplasmic segment spans residues 224-313 (WVVHKSEQRL…AKRNEWRITK (90 aa)). A disordered region spans residues 258 to 302 (LPSGAECQPSNRVSSDSSSSFSIDVPETAPSGKQQPTRVKDQREV). Low complexity predominate over residues 267-279 (SNRVSSDSSSSFS). A helical transmembrane segment spans residues 314 to 334 (MVLAIFLSFVVCYLPITIVKV). The Extracellular portion of the chain corresponds to 335 to 345 (ADKNVEHPSLH). A helical membrane pass occupies residues 346–366 (ICSYILLYLSACINPIIYVIM). Over 367–670 (NKQYRKAYKT…LTAKMKFPKD (304 aa)) the chain is Cytoplasmic. Disordered stretches follow at residues 461-490 (DLIS…GSNS), 562-622 (ELPP…YMNV), and 636-670 (TNAV…FPKD). Over residues 564–584 (PPTPPATSAPTTPAPPPPSSP) the composition is skewed to pro residues. Positions 585-598 (LHPLSTDSSTTTIS) are enriched in low complexity. The segment covering 646–660 (GPANTSATVSISGSK) has biased composition (polar residues).

The protein belongs to the G-protein coupled receptor 1 family. In terms of tissue distribution, isoform A and isoform B are expressed in the head. Isoform B only is expressed in the body. Expressed in embryonic glial cells that are involved in ensheathment and insulation of the nervous system. Both isoforms are expressed in glia that insulate the larval and adult nervous system. Also expressed in the germ cells, the gut, and the heart.

It is found in the cell membrane. Its function is as follows. Isoform A and isoform B are required in glia to regulate the acute sensitivity to cocaine and to continuously maintain the proper blood-brain barrier (BBB) function. A moody-mediated signaling pathway functions in glia to regulate nervous system insulation and drug-related behaviors. Galphai and Galphao, and the regulator of G protein signaling, loco, are required in the surface glia to achieve effective insulation. The components function by regulating the cortical actin and thereby stabilizing the extended morphology of the surface glia, which in turn is necessary for the formation of septate junctions of sufficient length to achieve proper sealing of the nerve cord. The protein is G-protein coupled receptor moody of Drosophila melanogaster (Fruit fly).